The primary structure comprises 901 residues: Nuclear factor of activated T-cells, cytoplasmic 4 (901 aa).

Acidic residues predominate over residues 1 to 11 (MGAASCEDEEL). Disordered regions lie at residues 1–180 (MGAA…SSWS) and 203–361 (NEAA…TEDS). Residues 61–81 (IPRPPPPRPGMHSPPPRPAPS) are compositionally biased toward pro residues. Residues 96–109 (GGPGGTAGGTGGGR) are compositionally biased toward gly residues. The segment at 114-119 (PSIRIT) is calcineurin-binding. The segment covering 114 to 123 (PSIRITSISP) has biased composition (low complexity). Over residues 151–165 (GFGGYREAGGQGGGA) the composition is skewed to gly residues. Residues 166–180 (FFSPSPGSSSLSSWS) show a composition bias toward low complexity. Serine 168, serine 170, serine 213, and serine 217 each carry phosphoserine. The SP 1 repeat unit spans residues 213–229 (SPLPSPRASPRPWTPED). A 2 approximate SP repeats region spans residues 213–293 (SPLPSPRASP…LSRRGSLGEE (81 aa)). Pro residues-rich tracts occupy residues 215–227 (LPSP…PWTP) and 254–263 (GPIPASPRPA). The Nuclear localization signal signature appears at 268–270 (KRR). Low complexity predominate over residues 272-288 (SSSGTPSSASPALSRRG). Residues 277–293 (PSSASPALSRRGSLGEE) form an SP 2; approximate repeat. A phosphoserine mark is found at serine 289, serine 334, and serine 344. The 182-residue stretch at 401-582 (SALPPLDWPL…VPIECSQRSA (182 aa)) folds into the RHD domain. Residues 430–437 (RAHYETEG) mediate DNA binding. The 98-residue stretch at 586–683 (PQVEAYSPSA…KRSPTQSFKF (98 aa)) folds into the IPT/TIG domain. A Nuclear localization signal motif is present at residues 672 to 674 (RRK). Residue lysine 689 forms a Glycyl lysine isopeptide (Lys-Gly) (interchain with G-Cter in SUMO2) linkage. Disordered regions lie at residues 697–721 (SLRG…PRPP) and 791–868 (QYGG…GFRD). Over residues 805-822 (FSPPAPFRPPLPSSPPLE) the composition is skewed to pro residues.

As to quaternary structure, member of the multicomponent NFATC transcription complex that consists of at least two components, a pre-existing cytoplasmic component NFATC2 and an inducible nuclear component NFATC1. Other NFAT proteins, such as NFATC4, NFATC3, or members of the activating protein-1 (AP-1) family and MAF can also bind the complex. NFAT proteins can bind DNA as monomers or dimers. Component of a promoter-binding complex composed of STAT3, NFATC3 and NFATC4; complex formation is enhanced by calcineurin. Interacts with CREBBP; this interaction potentiates transcription activation. Interacts with MAPK8/JNK1 and MAPK9/JNK2. Interacts with GATA4 (via the second Zn finger). Interacts (via N-terminus) with IRAK1 (via C-terminus). Interacts with RPS6KA3. Interacts with HOMER1, HOMER2 and HOMER3; this interaction competes with calcineurin/PPP3CA-binding and hence prevents NFATC4 dephosphorylation and activation. Interacts with ESR1 and ESR2; this interaction decreases NFATC4 transcriptional activity. Interacts with MTOR and MAPK7/ERK5. Interacts with TRIM17; this interaction prevents NFATC3 nuclear localization. Interacts with TCF25 (via C-terminus); the interaction leads to suppression of NFATC4 transcription factor activity and is reduced following stimulation with angiotensin-2. Phosphorylated by NFATC-kinases; dephosphorylated by calcineurin/PPP3CA. Phosphorylated on Ser-168 and Ser-170 by MTOR, IRAK1, MAPK7/ERK5 and MAPK14/p38, on Ser-213 and Ser-217 by MAPK8 and MAPK9, and on Ser-289 and Ser-344 by RPS6KA3. Phosphorylated by GSK3B; this phosphorylation markedly increases NFATC4 ubiquitination. Phosphorylation by MAPK8/JNK1, MAPK9/JNK2 and RPS6KA3 may stimulate NFATC4 transcriptional activity. Phosphorylation at Ser-168 and Ser-170 is stimulated by UV irradiation. Post-translationally, ubiquitinated, leading to degradation by the proteasome. Ubiquitination may be stimulated by GSK3B-dependent phosphorylation. Polyubiquitin linkage mainly occurs through 'Lys-48'. As to expression, expressed in heart (at protein level).

The protein resides in the cytoplasm. It is found in the nucleus. Functionally, ca(2+)-regulated transcription factor that is involved in several processes, including the development and function of the immune, cardiovascular, musculoskeletal, and nervous systems. Involved in T-cell activation, stimulating the transcription of cytokine genes, including that of IL2 and IL4. Along with NFATC3, involved in embryonic heart development. Following JAK/STAT signaling activation and as part of a complex with NFATC3 and STAT3, binds to the alpha-beta E4 promoter region of CRYAB and activates transcription in cardiomyocytes. Involved in mitochondrial energy metabolism required for cardiac morphogenesis and function. Transactivates many genes involved in heart physiology. Along with GATA4, binds to and activates NPPB/BNP promoter. Activates NPPA/ANP/ANF and MYH7/beta-MHC transcription. Binds to and transactivates AGTR2 gene promoter. Involved in the regulation of adult hippocampal neurogenesis. Involved in BDNF-driven pro-survival signaling in hippocampal adult-born neurons. Involved in the formation of long-term spatial memory and long-term potentiation. In cochlear nucleus neurons, may play a role in deafferentation-induced apoptosis during a developmental critical period when auditory neurons depend on afferent input for survival. Binds to and activates the BACE1/Beta-secretase 1 promoter, hence may regulate the proteolytic processing of the amyloid precursor protein (APP). Plays a role in adipocyte differentiation. May be involved in myoblast differentiation into myotubes. Binds the consensus DNA sequence 5'-GGAAAAT-3'. In the presence of CREBBP, activates TNF transcription. Binds to PPARG gene promoter and regulates its activity. Binds to PPARG and REG3G gene promoters. The protein is Nuclear factor of activated T-cells, cytoplasmic 4 (Nfatc4) of Rattus norvegicus (Rat).